The primary structure comprises 1084 residues: Transcription elongation factor SPT5 (1084 aa).

The interval 1–91 is disordered; it reads MSDSEDSDFS…DDEYEDEDPW (91 aa). 3 stretches are compositionally biased toward acidic residues: residues 20–32, 41–62, and 77–91; these read AEEV…EEEQ, AEEE…EEDD, and DEAD…EDPW. The segment at 175–269 is interaction with SUPT4H1; it reads DPNLWTVKCK…TDVLKVVKEV (95 aa). 4 KOW domains span residues 272-305, 419-450, 471-502, and 593-626; these read LKPK…ISLK, LQAG…ITIM, FRMG…VILF, and IHVK…LHCK. The segment at 312–419 is interaction with RNA polymerase II; sequence LDRIKARMSM…TTGKEREHNL (108 aa). S665 bears the Phosphoserine mark. Residues 667–700 form a disordered region; it reads RISSPMHPGGGGQPQRGGGGGGGGGMGRGRGRRD. Over residues 674-694 the composition is skewed to gly residues; sequence PGGGGQPQRGGGGGGGGGMGR. Residues 702–735 form the KOW 5 domain; that stretch reads DLIGQTVRISQGPYKGYIGVVKDATESTARVELH. Residues 748-973 are disordered; the sequence is LTTVGGKERQ…HTPGSNIDQA (226 aa). A CTR1-1; approximate repeat occupies 758 to 763; sequence GRSSTH. The interval 758-815 is 8 X 7 AA approximate tandem repeats of G-S-[QR]-T-P-X-[YQ], motif CTR1; it reads GRSSTHLRTPMYGSQTPIYGTGSRTPMYGSQTPLHDGSRTPHYGSQTPLHDGSRTPGQ. Positions 759-790 are enriched in polar residues; it reads RSSTHLRTPMYGSQTPIYGTGSRTPMYGSQTP. The CTR1-2; approximate repeat unit spans residues 764–769; the sequence is LRTPMY. A CTR1-3 repeat occupies 770–776; that stretch reads GSQTPIY. Phosphothreonine; by CDK9 occurs at positions 773 and 782. One copy of the CTR1-4 repeat lies at 779–785; that stretch reads GSRTPMY. Residues 786-792 form a CTR1-5 repeat; sequence GSQTPLH. The stretch at 794–800 is one CTR1-6 repeat; the sequence is GSRTPHY. A CTR1-7 repeat occupies 801–807; sequence GSQTPLH. The CTR1-8 repeat unit spans residues 809 to 815; that stretch reads GSRTPGQ. Residues 832–842 show a composition bias toward acidic residues; it reads DEYEFAYDDEP. The stretch at 842–849 is one CTR2-1 repeat; that stretch reads PSPSPQGY. The interval 842–948 is 10 X 8 AA approximate tandem repeats of P-[TS]-P-S-P-[QA]-[SG]-Y, motif CTR2; the sequence is PSPSPQGYGG…ASPSPSPVGY (107 aa). The CTR2-2; approximate repeat unit spans residues 852–860; the sequence is TPNPQTPGY. A compositionally biased stretch (pro residues) spans 855-864; sequence PQTPGYPEVP. Residues 861 to 867 form a CTR2-3; approximate repeat; sequence PEVPSPQ. Residues 866–888 show a composition bias toward polar residues; it reads PQVNPQYNPQTPGTPAMYNTDQY. One copy of the CTR2-4; half-length repeat lies at 879–883; that stretch reads TPAMY. One copy of the CTR2-5; approximate repeat lies at 894 to 900; that stretch reads PSPQGSY. Positions 894–909 are enriched in low complexity; it reads PSPQGSYQPSPSPQSY. A CTR2-6 repeat occupies 902 to 909; the sequence is PSPSPQSY. Residues 914–919 form a CTR2-7; approximate repeat; sequence PSPVGY. The CTR2-8 repeat unit spans residues 922–928; it reads THSPASY. Residues 930 to 937 form a CTR2-9 repeat; the sequence is PTPSPMAY. The stretch at 941-948 is one CTR2-10 repeat; it reads PSPSPVGY.

The protein belongs to the SPT5 family. Interacts with SUPT4H1 to form the DSIF complex. DSIF interacts with RNA polymerase II and with the positive transcription elongation factor b complex (P-TEFb complex), which is composed of CDK9 and cyclin-T. Phosphorylated. Phosphorylation by P-TEFb (CDK9) at Thr residues of the C-terminal repeats alleviates transcriptional pausing and promotes transcription elongation.

It is found in the nucleus. In terms of biological role, component of the DRB sensitivity-inducing factor complex (DSIF complex), which regulates mRNA processing and transcription elongation by RNA polymerase II. DSIF positively regulates mRNA capping by stimulating the mRNA guanylyltransferase activity of RNGTT/CAP1A. DSIF also acts cooperatively with the negative elongation factor complex (NELF complex) to enhance transcriptional pausing at sites proximal to the promoter. Transcriptional pausing may facilitate the assembly of an elongation competent RNA polymerase II complex. DSIF and NELF promote pausing by inhibition of the transcription elongation factor TFIIS/S-II. TFIIS/S-II binds to RNA polymerase II at transcription pause sites and stimulates the weak intrinsic nuclease activity of the enzyme. Cleavage of blocked transcripts by RNA polymerase II promotes the resumption of transcription from the new 3' terminus and may allow repeated attempts at transcription through natural pause sites. Following phosphorylation by CDK9, DSIF can also positively regulate transcriptional elongation. Regulation of transcriptional elongation by this protein is required for the expression of genes which control neuronal development. The polypeptide is Transcription elongation factor SPT5 (supt5h) (Danio rerio (Zebrafish)).